A 203-amino-acid polypeptide reads, in one-letter code: Thymidylate kinase (203 aa).

10 to 17 contributes to the ATP binding site; it reads GVEGSGKT.

The protein belongs to the thymidylate kinase family.

The catalysed reaction is dTMP + ATP = dTDP + ADP. Phosphorylation of dTMP to form dTDP in both de novo and salvage pathways of dTTP synthesis. The chain is Thymidylate kinase from Carboxydothermus hydrogenoformans (strain ATCC BAA-161 / DSM 6008 / Z-2901).